The chain runs to 633 residues: Pesticidal crystal protein Cry2Ab (633 aa).

It belongs to the delta endotoxin family.

In terms of biological role, promotes colloidosmotic lysis by binding to the midgut epithelial cells of lepidopteran (Manduca sexta) larvae. The chain is Pesticidal crystal protein Cry2Ab (cry2Ab) from Bacillus thuringiensis subsp. kurstaki.